The sequence spans 916 residues: Translation initiation factor IF-2 (916 aa).

A disordered region spans residues 55–324; the sequence is EPKAVTPTSK…NHNANLKPVT (270 aa). The segment covering 77-88 has biased composition (low complexity); that stretch reads AAEPKAAATKPA. Basic and acidic residues-rich tracts occupy residues 98 to 121, 129 to 161, and 198 to 212; these read FKAE…ERRN, RQKD…DNRN, and RQSE…EAKR. Residues 227-250 show a composition bias toward low complexity; the sequence is KEQPTVEAAATAAPQAQPQTVEQV. Basic and acidic residues predominate over residues 264–281; sequence ARPDKSRDFSHENEDGPK. Over residues 291-304 the composition is skewed to low complexity; it reads KQNQVRNQKNSNWN. A compositionally biased stretch (basic residues) spans 305 to 314; sequence KKNKKSKNNR. A tr-type G domain is found at 418-585; sequence ERAPVVTIMG…TVLLVAEIQE (168 aa). The tract at residues 427–434 is G1; sequence GHVDHGKT. Residue 427–434 participates in GTP binding; that stretch reads GHVDHGKT. A G2 region spans residues 452–456; that stretch reads GITQH. The tract at residues 473–476 is G3; sequence DTPG. GTP contacts are provided by residues 473–477 and 527–530; these read DTPGH and NKID. Residues 527 to 530 form a G4 region; that stretch reads NKID. The interval 563–565 is G5; the sequence is SAK.

This sequence belongs to the TRAFAC class translation factor GTPase superfamily. Classic translation factor GTPase family. IF-2 subfamily.

The protein localises to the cytoplasm. Its function is as follows. One of the essential components for the initiation of protein synthesis. Protects formylmethionyl-tRNA from spontaneous hydrolysis and promotes its binding to the 30S ribosomal subunits. Also involved in the hydrolysis of GTP during the formation of the 70S ribosomal complex. The protein is Translation initiation factor IF-2 of Streptococcus mutans serotype c (strain ATCC 700610 / UA159).